We begin with the raw amino-acid sequence, 249 residues long: Galactan endo-beta-1,3-galactanase (249 aa).

Positions 1-21 are cleaved as a signal peptide; it reads MKLFVVLACLAAPGTFPFVDA. The GH16 domain occupies 34 to 247; the sequence is STYWNNFYPW…KARNVQVTRT (214 aa). N-linked (GlcNAc...) asparagine glycosylation occurs at Asn-48. The active-site Nucleophile is Glu-138. Catalysis depends on Glu-143, which acts as the Proton donor. An N-linked (GlcNAc...) asparagine glycan is attached at Asn-156.

This sequence belongs to the glycosyl hydrolase 16 family. Post-translationally, N-glycosylated.

It catalyses the reaction The enzyme specifically hydrolyzes beta-1,3-galactan and beta-1,3-galactooligosaccharides.. Functionally, specifically hydrolyzes beta-1,3-galactan in an endo-fashion. Requires at least 3 contiguous beta-1,3-residues. This chain is Galactan endo-beta-1,3-galactanase (EN3GAL), found in Flammulina velutipes (Agaricus velutipes).